An 81-amino-acid polypeptide reads, in one-letter code: UPF0180 protein ABC2430 (81 aa).

The protein belongs to the UPF0180 family.

In Shouchella clausii (strain KSM-K16) (Alkalihalobacillus clausii), this protein is UPF0180 protein ABC2430.